A 215-amino-acid chain; its full sequence is ATP-dependent dethiobiotin synthetase BioD (215 aa).

An ATP-binding site is contributed by Asp13–Val18. Thr17 lines the Mg(2+) pocket. Lys38 is an active-site residue. Residue Thr42 participates in substrate binding. Residues Asp50, Glu115–Gly118, and Asn175–His176 contribute to the ATP site. 2 residues coordinate Mg(2+): Asp50 and Glu115.

Belongs to the dethiobiotin synthetase family. Homodimer. Mg(2+) serves as cofactor.

Its subcellular location is the cytoplasm. It carries out the reaction (7R,8S)-7,8-diammoniononanoate + CO2 + ATP = (4R,5S)-dethiobiotin + ADP + phosphate + 3 H(+). The protein operates within cofactor biosynthesis; biotin biosynthesis; biotin from 7,8-diaminononanoate: step 1/2. Its function is as follows. Catalyzes a mechanistically unusual reaction, the ATP-dependent insertion of CO2 between the N7 and N8 nitrogen atoms of 7,8-diaminopelargonic acid (DAPA, also called 7,8-diammoniononanoate) to form a ureido ring. The sequence is that of ATP-dependent dethiobiotin synthetase BioD from Neisseria gonorrhoeae (strain NCCP11945).